A 226-amino-acid polypeptide reads, in one-letter code: Leucyl/phenylalanyl-tRNA--protein transferase (226 aa).

The protein belongs to the L/F-transferase family.

Its subcellular location is the cytoplasm. It carries out the reaction N-terminal L-lysyl-[protein] + L-leucyl-tRNA(Leu) = N-terminal L-leucyl-L-lysyl-[protein] + tRNA(Leu) + H(+). The catalysed reaction is N-terminal L-arginyl-[protein] + L-leucyl-tRNA(Leu) = N-terminal L-leucyl-L-arginyl-[protein] + tRNA(Leu) + H(+). It catalyses the reaction L-phenylalanyl-tRNA(Phe) + an N-terminal L-alpha-aminoacyl-[protein] = an N-terminal L-phenylalanyl-L-alpha-aminoacyl-[protein] + tRNA(Phe). In terms of biological role, functions in the N-end rule pathway of protein degradation where it conjugates Leu, Phe and, less efficiently, Met from aminoacyl-tRNAs to the N-termini of proteins containing an N-terminal arginine or lysine. The polypeptide is Leucyl/phenylalanyl-tRNA--protein transferase (Ectopseudomonas mendocina (strain ymp) (Pseudomonas mendocina)).